A 559-amino-acid chain; its full sequence is Formate--tetrahydrofolate ligase (559 aa).

Position 68 to 75 (68 to 75 (TPAGEGKT)) interacts with ATP.

Belongs to the formate--tetrahydrofolate ligase family.

The catalysed reaction is (6S)-5,6,7,8-tetrahydrofolate + formate + ATP = (6R)-10-formyltetrahydrofolate + ADP + phosphate. It functions in the pathway one-carbon metabolism; tetrahydrofolate interconversion. This Moorella thermoacetica (strain ATCC 39073 / JCM 9320) protein is Formate--tetrahydrofolate ligase.